Here is a 663-residue protein sequence, read N- to C-terminus: Alpha-amylase MalA (663 aa).

Disordered stretches follow at residues 1-28 and 80-135; these read MHHP…PTAT and GTLE…LTLR. The span at 92 to 111 shows a compositional bias: gly residues; the sequence is RSGGHSGGVSGGRSGPGRSG. D411 serves as the catalytic Nucleophile. E440 acts as the Proton donor in catalysis.

It belongs to the glycosyl hydrolase 13 family.

Its subcellular location is the cytoplasm. The enzyme catalyses Endohydrolysis of (1-&gt;4)-alpha-D-glucosidic linkages in polysaccharides containing three or more (1-&gt;4)-alpha-linked D-glucose units.. It functions in the pathway glycan degradation; starch degradation. Stable and active over a broad range of NaCl concentrations (0.5 to 4.2 M NaCl), with maximal activity at 2.6 M NaCl. 83% and 94% of the maximum activity at 0.6 and 4.2 M NaCl, respectively. Active and stable also in KCl. Functionally, alpha-amylase that cleaves starch into oligosaccharides, the first step in starch degradation. Endo-acting enzyme which prefers a linear polysaccharide to branched polysaccharides hydrolyzing alpha-1,4 glucosidic bonds efficiently. Also has transglycosylation activity, but does not act on alpha-1,6 bonds. Higher activities of 100%, 79% and 67.8% against amylose, soluble starch and amylopectin, respectively. Lower activity of 22% against glycogen and faint or no activity against alpha-, beta- and gamma-cyclodextrin. The protein is Alpha-amylase MalA of Haloarcula japonica (strain ATCC 49778 / DSM 6131 / JCM 7785 / NBRC 101032 / NCIMB 13157 / TR-1).